Consider the following 328-residue polypeptide: Cytochrome c biogenesis protein CcsA (328 aa).

8 helical membrane passes run 13 to 33, 46 to 66, 73 to 93, 101 to 121, 146 to 166, 234 to 254, 263 to 283, and 295 to 315; these read ISFS…LVNL, GIII…IFSG, LYES…VSYF, LNAI…SGLL, MILG…LLVI, IISL…VWAN, WDPK…YLHI, and AIVA…VNLL.

The protein belongs to the CcmF/CycK/Ccl1/NrfE/CcsA family. As to quaternary structure, may interact with Ccs1.

The protein localises to the plastid. The protein resides in the chloroplast thylakoid membrane. In terms of biological role, required during biogenesis of c-type cytochromes (cytochrome c6 and cytochrome f) at the step of heme attachment. The polypeptide is Cytochrome c biogenesis protein CcsA (Olimarabidopsis pumila (Dwarf rocket)).